The chain runs to 122 residues: Large ribosomal subunit protein uL14 (122 aa).

This sequence belongs to the universal ribosomal protein uL14 family. In terms of assembly, part of the 50S ribosomal subunit. Forms a cluster with proteins L3 and L19. In the 70S ribosome, L14 and L19 interact and together make contacts with the 16S rRNA in bridges B5 and B8.

Functionally, binds to 23S rRNA. Forms part of two intersubunit bridges in the 70S ribosome. The chain is Large ribosomal subunit protein uL14 from Rhodococcus jostii (strain RHA1).